A 651-amino-acid chain; its full sequence is Bromodomain-containing protein 7 (651 aa).

A Glycyl lysine isopeptide (Lys-Gly) (interchain with G-Cter in SUMO2) cross-link involves residue lysine 21. A disordered region spans residues 34-103 (VTELSTGSSG…RDRAENEVDR (70 aa)). Residues 35–45 (TELSTGSSGHD) show a composition bias toward polar residues. The segment covering 47–57 (SLFEDRSDHDK) has biased composition (basic and acidic residues). The segment covering 58–69 (HKDRKRKKRKKG) has biased composition (basic residues). The Nuclear localization signal signature appears at 65-96 (KRKKGEKQAPGEEKGRKRRRVKEDKKKRDRDR). Residues 70–103 (EKQAPGEEKGRKRRRVKEDKKKRDRDRAENEVDR) show a composition bias toward basic and acidic residues. Glycyl lysine isopeptide (Lys-Gly) (interchain with G-Cter in SUMO2) cross-links involve residues lysine 127, lysine 186, lysine 197, lysine 201, lysine 212, and lysine 241. The region spanning 131-235 (VEQTPLQEAL…HSGMKILSQE (105 aa)) is the Bromo domain. Residues 252 to 316 (KTRKQKERTD…RSSNSEREHE (65 aa)) form a disordered region. Serine 279 and serine 289 each carry phosphoserine. The span at 290 to 316 (PAKDNKRKDKDVLEDKWRSSNSEREHE) shows a compositional bias: basic and acidic residues. Lysine 305 is covalently cross-linked (Glycyl lysine isopeptide (Lys-Gly) (interchain with G-Cter in SUMO2)). Lysine 328 carries the N6-acetyllysine modification. Residue lysine 344 forms a Glycyl lysine isopeptide (Lys-Gly) (interchain with G-Cter in SUMO2) linkage. The residue at position 380 (serine 380) is a Phosphoserine. Residue lysine 389 forms a Glycyl lysine isopeptide (Lys-Gly) (interchain with G-Cter in SUMO2) linkage. 3 positions are modified to phosphoserine: serine 475, serine 482, and serine 483. Residues 536 to 567 (SEEAEVFQRKLDETTRLLRELQEAQNERLSTR) adopt a coiled-coil conformation. Position 621 is a phosphoserine (serine 621).

As to quaternary structure, interacts with IRF2 and HNRPUL1. Interacts (via N-terminus) with TP53. Interacts (via C-terminus) with EP300. Interacts with BRCA1. Interacts (via bromo domain) with histone H3 (via N-terminus) acetylated at 'Lys-14' (H3K14ac). Has low affinity for histone H3 acetylated at 'Lys-9' (H3K9ac). Has the highest affinity for histone H3 that is acetylated both at 'Lys-9' (H3K9ac) and at 'Lys-14' (H3K14ac). Has very low affinity for non-acetylated histone H3. Interacts (via bromo domain) with histone H4 (via N-terminus) acetylated at 'Lys-8' (H3K8ac) (in vitro). Interacts with TRIM24, PTPN13 and DVL1. Identified in a complex with SMARCA4/BRG1, SMARCC1/BAF155, SMARCE1/BAF57, DPF2/BAF45D and ARID2, subunits of the SWI/SNF-B (PBAF) chromatin remodeling complex. As to expression, ubiquitous.

It is found in the nucleus. Its subcellular location is the chromosome. Functionally, acts both as coactivator and as corepressor. May play a role in chromatin remodeling. Transcriptional corepressor that down-regulates the expression of target genes. Binds to target promoters, leading to increased histone H3 acetylation at 'Lys-9' (H3K9ac). Binds to the ESR1 promoter. Recruits BRCA1 and POU2F1 to the ESR1 promoter. Coactivator for TP53-mediated activation of transcription of a set of target genes. Required for TP53-mediated cell-cycle arrest in response to oncogene activation. Promotes acetylation of TP53 at 'Lys-382', and thereby promotes efficient recruitment of TP53 to target promoters. Inhibits cell cycle progression from G1 to S phase. Activator of the Wnt signaling pathway in a DVL1-dependent manner by negatively regulating the GSK3B phosphotransferase activity. Induces dephosphorylation of GSK3B at 'Tyr-216'. Down-regulates TRIM24-mediated activation of transcriptional activation by AR. This is Bromodomain-containing protein 7 (Brd7) from Mus musculus (Mouse).